A 321-amino-acid chain; its full sequence is CRISPR-associated endonuclease Cas1 2 (321 aa).

Mn(2+)-binding residues include Glu-150, His-213, and Glu-228.

This sequence belongs to the CRISPR-associated endonuclease Cas1 family. As to quaternary structure, homodimer, forms a heterotetramer with a Cas2 homodimer. It depends on Mg(2+) as a cofactor. Requires Mn(2+) as cofactor.

Its function is as follows. CRISPR (clustered regularly interspaced short palindromic repeat), is an adaptive immune system that provides protection against mobile genetic elements (viruses, transposable elements and conjugative plasmids). CRISPR clusters contain spacers, sequences complementary to antecedent mobile elements, and target invading nucleic acids. CRISPR clusters are transcribed and processed into CRISPR RNA (crRNA). Acts as a dsDNA endonuclease. Involved in the integration of spacer DNA into the CRISPR cassette. In Moorella thermoacetica (strain ATCC 39073 / JCM 9320), this protein is CRISPR-associated endonuclease Cas1 2.